The sequence spans 604 residues: Sulfite reductase [NADPH] flavoprotein alpha-component (604 aa).

Residues 65–203 form the Flavodoxin-like domain; the sequence is VTILYGSQTG…AAGQWHADVL (139 aa). FMN is bound by residues 71 to 76, 118 to 121, and 154 to 163; these read SQTGNG, STHG, and LGDSSYEFFC. In terms of domain architecture, FAD-binding FR-type spans 236–453; it reads QNPYSAEVLV…VEPNKHFRLP (218 aa). Residues Thr-324, Leu-358, 392 to 395, 410 to 412, and 425 to 428 contribute to the FAD site; these read RLYS, TVA, and GGAS. NADP(+) is bound by residues 524–525, 530–534, and Asp-566; these read SR and KIYVQ. Tyr-604 provides a ligand contact to FAD.

This sequence belongs to the NADPH-dependent sulphite reductase flavoprotein subunit CysJ family. The protein in the N-terminal section; belongs to the flavodoxin family. It in the C-terminal section; belongs to the flavoprotein pyridine nucleotide cytochrome reductase family. As to quaternary structure, alpha(8)-beta(8). The alpha component is a flavoprotein, the beta component is a hemoprotein. Requires FAD as cofactor. FMN is required as a cofactor.

The catalysed reaction is hydrogen sulfide + 3 NADP(+) + 3 H2O = sulfite + 3 NADPH + 4 H(+). Its pathway is sulfur metabolism; hydrogen sulfide biosynthesis; hydrogen sulfide from sulfite (NADPH route): step 1/1. In terms of biological role, component of the sulfite reductase complex that catalyzes the 6-electron reduction of sulfite to sulfide. This is one of several activities required for the biosynthesis of L-cysteine from sulfate. The flavoprotein component catalyzes the electron flow from NADPH -&gt; FAD -&gt; FMN to the hemoprotein component. This Shewanella sp. (strain MR-4) protein is Sulfite reductase [NADPH] flavoprotein alpha-component.